A 307-amino-acid chain; its full sequence is Small ribosomal subunit biogenesis GTPase RsgA (307 aa).

Residues 1–21 form a disordered region; the sequence is MPSEHPFSDGISTPNPKETMN. The span at 10–21 shows a compositional bias: polar residues; sequence GISTPNPKETMN. The CP-type G domain maps to 85-242; sequence RQDAWKTKLI…LIDSPGLQEF (158 aa). GTP-binding positions include 135-138 and 184-192; these read NKAD and GQSGMGKST. The Zn(2+) site is built by Cys-266, Cys-271, His-273, and Cys-279.

Belongs to the TRAFAC class YlqF/YawG GTPase family. RsgA subfamily. As to quaternary structure, monomer. Associates with 30S ribosomal subunit, binds 16S rRNA. It depends on Zn(2+) as a cofactor.

The protein localises to the cytoplasm. Functionally, one of several proteins that assist in the late maturation steps of the functional core of the 30S ribosomal subunit. Helps release RbfA from mature subunits. May play a role in the assembly of ribosomal proteins into the subunit. Circularly permuted GTPase that catalyzes slow GTP hydrolysis, GTPase activity is stimulated by the 30S ribosomal subunit. The polypeptide is Small ribosomal subunit biogenesis GTPase RsgA (Neisseria gonorrhoeae (strain ATCC 700825 / FA 1090)).